A 96-amino-acid chain; its full sequence is Salivary protein FS50 (96 aa).

An N-terminal signal peptide occupies residues 1–19; it reads MKWILVLALVCLAVEYSYS. 4 disulfides stabilise this stretch: cysteine 26/cysteine 71, cysteine 50/cysteine 78, cysteine 63/cysteine 91, and cysteine 67/cysteine 93.

It localises to the secreted. Functionally, salivary protein that inhibits host voltage-gated sodium channel Nav1.5/SCN5A. The polypeptide is Salivary protein FS50 (Xenopsylla cheopis (Oriental rat flea)).